A 203-amino-acid chain; its full sequence is Cold-regulated 413 plasma membrane protein 2 (203 aa).

Topologically, residues 1–43 are extracellular; the sequence is MGRMDYLAMKTDDVDTVALVNSDMEELKVAAKKLFSDVSKLGG. Residues 44–64 form a helical membrane-spanning segment; sequence LGFGVSFLKFLASFAAIYLLI. The Cytoplasmic segment spans residues 65–74; it reads LDRTNWKTKM. The helical transmembrane segment at 75–95 threads the bilayer; it reads LTSLLIPYIFLSLPSVIFNFL. The Extracellular segment spans residues 96-98; it reads SGD. The helical transmembrane segment at 99–119 threads the bilayer; that stretch reads VGKWIAFVAVVLRLFFPKHFP. Residue D120 is a topological domain, cytoplasmic. A helical membrane pass occupies residues 121-141; the sequence is WLEMPGSLILLLVVSPHFLAH. Residues 142–144 are Extracellular-facing; sequence HIR. A helical membrane pass occupies residues 145 to 165; it reads GTWIGTVISLFIGCYLLQEHI. Residues 166 to 179 lie on the Cytoplasmic side of the membrane; it reads RASGGFRNSFTQPR. A helical membrane pass occupies residues 180–200; it reads GVSNTLGIILLLVYPVWALIV. The Extracellular segment spans residues 201-203; the sequence is RVM.

It belongs to the Cold-regulated 413 protein family.

Its subcellular location is the cell membrane. The protein is Cold-regulated 413 plasma membrane protein 2 (COR413PM2) of Arabidopsis thaliana (Mouse-ear cress).